The primary structure comprises 140 residues: NADH-quinone oxidoreductase subunit I (140 aa).

4Fe-4S ferredoxin-type domains lie at 42-71 (GSFTLHSEKCIACGLCQQACPNKVIKVGSI) and 81-110 (ASYEMEMKYCLFCGLCVEACPTNALVFNQE). C51, C54, C57, C61, C90, C93, C96, and C100 together coordinate [4Fe-4S] cluster.

This sequence belongs to the complex I 23 kDa subunit family. As to quaternary structure, NDH-1 is composed of 14 different subunits. Subunits NuoA, H, J, K, L, M, N constitute the membrane sector of the complex. Requires [4Fe-4S] cluster as cofactor.

The protein resides in the cell membrane. It catalyses the reaction a quinone + NADH + 5 H(+)(in) = a quinol + NAD(+) + 4 H(+)(out). NDH-1 shuttles electrons from NADH, via FMN and iron-sulfur (Fe-S) centers, to quinones in the respiratory chain. The immediate electron acceptor for the enzyme in this species is believed to be ubiquinone. Couples the redox reaction to proton translocation (for every two electrons transferred, four hydrogen ions are translocated across the cytoplasmic membrane), and thus conserves the redox energy in a proton gradient. This chain is NADH-quinone oxidoreductase subunit I, found in Carboxydothermus hydrogenoformans (strain ATCC BAA-161 / DSM 6008 / Z-2901).